Reading from the N-terminus, the 153-residue chain is SsrA-binding protein (153 aa).

It belongs to the SmpB family.

It localises to the cytoplasm. Required for rescue of stalled ribosomes mediated by trans-translation. Binds to transfer-messenger RNA (tmRNA), required for stable association of tmRNA with ribosomes. tmRNA and SmpB together mimic tRNA shape, replacing the anticodon stem-loop with SmpB. tmRNA is encoded by the ssrA gene; the 2 termini fold to resemble tRNA(Ala) and it encodes a 'tag peptide', a short internal open reading frame. During trans-translation Ala-aminoacylated tmRNA acts like a tRNA, entering the A-site of stalled ribosomes, displacing the stalled mRNA. The ribosome then switches to translate the ORF on the tmRNA; the nascent peptide is terminated with the 'tag peptide' encoded by the tmRNA and targeted for degradation. The ribosome is freed to recommence translation, which seems to be the essential function of trans-translation. This chain is SsrA-binding protein, found in Orientia tsutsugamushi (strain Boryong) (Rickettsia tsutsugamushi).